The chain runs to 276 residues: Halorhodopsin (276 aa).

The propeptide occupies 1 to 20 (MTAASTTATTVLQATQSDVL). Residue Gln21 is modified to Pyrrolidone carboxylic acid. 7 helical membrane passes run 31-51 (SSIW…VAMG), 61-81 (LIWV…AGLA), 109-129 (YLTW…LADT), 134-154 (LFTA…AALI), 162-182 (WVFY…LLVQ), 195-215 (IFGT…ILWA), and 220-240 (GVAL…DILA). The residue at position 241 (Lys241) is an N6-(retinylidene)lysine.

Belongs to the archaeal/bacterial/fungal opsin family. The covalent binding of retinal to the apoprotein, bacterioopsin, generates bacteriorhodopsin.

Its subcellular location is the membrane. Functionally, light-driven chloride pump. This is Halorhodopsin (hop) from Haloarcula marismortui (strain ATCC 43049 / DSM 3752 / JCM 8966 / VKM B-1809) (Halobacterium marismortui).